The chain runs to 26 residues: Ribulose bisphosphate carboxylase large chain (26 aa).

The propeptide occupies 1-2; the sequence is MS. Pro3 bears the N-acetylproline mark.

It belongs to the RuBisCO large chain family. Type I subfamily. In terms of assembly, heterohexadecamer of 8 large chains and 8 small chains.

It localises to the plastid. Its subcellular location is the chloroplast. The catalysed reaction is 2 (2R)-3-phosphoglycerate + 2 H(+) = D-ribulose 1,5-bisphosphate + CO2 + H2O. It carries out the reaction D-ribulose 1,5-bisphosphate + O2 = 2-phosphoglycolate + (2R)-3-phosphoglycerate + 2 H(+). In terms of biological role, ruBisCO catalyzes two reactions: the carboxylation of D-ribulose 1,5-bisphosphate, the primary event in carbon dioxide fixation, as well as the oxidative fragmentation of the pentose substrate in the photorespiration process. Both reactions occur simultaneously and in competition at the same active site. The protein is Ribulose bisphosphate carboxylase large chain (rbcL) of Vicia faba (Broad bean).